The sequence spans 170 residues: Chorion protein S18 (170 aa).

The N-terminal stretch at 1 to 17 is a signal peptide; that stretch reads MMKFMCIFVCAIAAVSA. Positions 146-159 are enriched in low complexity; sequence AAAASSSVAGQHSG. The disordered stretch occupies residues 146–170; the sequence is AAAASSSVAGQHSGYKNSGYKNSSY. Residues 160 to 170 are compositionally biased toward polar residues; the sequence is YKNSGYKNSSY.

Belongs to the chorion protein S15/S18 family.

The protein resides in the secreted. Chorion membrane (egg shell) protein; plays a role in protecting the egg from the environment. The polypeptide is Chorion protein S18 (Cp18) (Drosophila virilis (Fruit fly)).